Reading from the N-terminus, the 132-residue chain is UPF0299 membrane protein YohJ (132 aa).

The next 4 helical transmembrane spans lie at 8–28 (IWQYVRAFVLIYACLYAGIFI), 31–51 (LLPVTIPGSIIGMLILFVLLA), 63–83 (GCYLLIRYMALLFVPIGVGVM), and 93–113 (FGPVVVSCAISTLVVFLVVSW).

This sequence belongs to the UPF0299 family.

It localises to the cell inner membrane. The protein is UPF0299 membrane protein YohJ of Escherichia fergusonii (strain ATCC 35469 / DSM 13698 / CCUG 18766 / IAM 14443 / JCM 21226 / LMG 7866 / NBRC 102419 / NCTC 12128 / CDC 0568-73).